The sequence spans 252 residues: RNA-binding protein 7 (252 aa).

Residues 9-86 (RTLFVGNLDP…RQLNIKFKTG (78 aa)) form the RRM domain. 2 stretches are compositionally biased toward polar residues: residues 88–107 (SHIN…SPAN) and 119–137 (QMGS…PFSS). Disordered stretches follow at residues 88-137 (SHIN…PFSS) and 171-252 (QLRG…WKHF). Basic and acidic residues-rich tracts occupy residues 211–230 (ERNR…DRSG) and 237–252 (PPDR…WKHF).

Component of the nuclear exosome targeting (NEXT) complex composed of MTREX, ZCCHC8, and RBM7 that directs a subset of non-coding short-lived RNAs for exosomal degradation.

Its subcellular location is the nucleus. It is found in the nucleoplasm. RNA-binding subunit of the trimeric nuclear exosome targeting (NEXT) complex, a complex that functions as an RNA exosome cofactor that directs a subset of non-coding short-lived RNAs for exosomal degradation. NEXT is involved in surveillance and turnover of aberrant transcripts and non-coding RNAs. Binds preferentially polyuridine sequences and associates with newly synthesized RNAs, including pre-mRNAs and short-lived exosome substrates such as promoter upstream transcripts (PROMPTs), enhancer RNAs (eRNAs), and 3'-extended products from small nuclear RNAs (snRNAs). The polypeptide is RNA-binding protein 7 (Danio rerio (Zebrafish)).